Here is a 392-residue protein sequence, read N- to C-terminus: 8-amino-7-oxononanoate synthase (392 aa).

Residue R26 coordinates substrate. A pyridoxal 5'-phosphate-binding site is contributed by 112 to 113 (GF). H137 is a binding site for substrate. Pyridoxal 5'-phosphate contacts are provided by S187, H215, and T241. Residue K244 is modified to N6-(pyridoxal phosphate)lysine. T357 provides a ligand contact to substrate.

It belongs to the class-II pyridoxal-phosphate-dependent aminotransferase family. BioF subfamily. In terms of assembly, homodimer. Pyridoxal 5'-phosphate serves as cofactor.

It catalyses the reaction 6-carboxyhexanoyl-[ACP] + L-alanine + H(+) = (8S)-8-amino-7-oxononanoate + holo-[ACP] + CO2. The protein operates within cofactor biosynthesis; biotin biosynthesis. Catalyzes the decarboxylative condensation of pimeloyl-[acyl-carrier protein] and L-alanine to produce 8-amino-7-oxononanoate (AON), [acyl-carrier protein], and carbon dioxide. The sequence is that of 8-amino-7-oxononanoate synthase from Photobacterium profundum (strain SS9).